The primary structure comprises 230 residues: Sugar fermentation stimulation protein homolog (230 aa).

Belongs to the SfsA family.

The protein is Sugar fermentation stimulation protein homolog of Clostridium perfringens (strain ATCC 13124 / DSM 756 / JCM 1290 / NCIMB 6125 / NCTC 8237 / Type A).